The following is a 273-amino-acid chain: Light-independent protochlorophyllide reductase iron-sulfur ATP-binding protein (273 aa).

ATP-binding positions include 12 to 17 and lysine 41; that span reads GIGKST. Serine 16 is a binding site for Mg(2+). [4Fe-4S] cluster-binding residues include cysteine 97 and cysteine 131. ATP is bound at residue 182–183; the sequence is NR.

The protein belongs to the NifH/BchL/ChlL family. In terms of assembly, homodimer. Protochlorophyllide reductase is composed of three subunits; BchL, BchN and BchB. The cofactor is [4Fe-4S] cluster.

The catalysed reaction is chlorophyllide a + oxidized 2[4Fe-4S]-[ferredoxin] + 2 ADP + 2 phosphate = protochlorophyllide a + reduced 2[4Fe-4S]-[ferredoxin] + 2 ATP + 2 H2O. It participates in porphyrin-containing compound metabolism; bacteriochlorophyll biosynthesis (light-independent). In terms of biological role, component of the dark-operative protochlorophyllide reductase (DPOR) that uses Mg-ATP and reduced ferredoxin to reduce ring D of protochlorophyllide (Pchlide) to form chlorophyllide a (Chlide). This reaction is light-independent. The L component serves as a unique electron donor to the NB-component of the complex, and binds Mg-ATP. This Roseiflexus sp. (strain RS-1) protein is Light-independent protochlorophyllide reductase iron-sulfur ATP-binding protein.